The following is a 123-amino-acid chain: Small ribosomal subunit protein uS12 (123 aa).

At D89 the chain carries 3-methylthioaspartic acid.

This sequence belongs to the universal ribosomal protein uS12 family. In terms of assembly, part of the 30S ribosomal subunit. Contacts proteins S8 and S17. May interact with IF1 in the 30S initiation complex.

With S4 and S5 plays an important role in translational accuracy. In terms of biological role, interacts with and stabilizes bases of the 16S rRNA that are involved in tRNA selection in the A site and with the mRNA backbone. Located at the interface of the 30S and 50S subunits, it traverses the body of the 30S subunit contacting proteins on the other side and probably holding the rRNA structure together. The combined cluster of proteins S8, S12 and S17 appears to hold together the shoulder and platform of the 30S subunit. The protein is Small ribosomal subunit protein uS12 of Methylobacterium nodulans (strain LMG 21967 / CNCM I-2342 / ORS 2060).